Reading from the N-terminus, the 366-residue chain is Chitoporin (366 aa).

Residues 1-23 (MDKMFKRTVIGAAVALASTGLMA) form the signal peptide.

Belongs to the Gram-negative porin family.

The protein localises to the cell outer membrane. In terms of biological role, involved in the uptake of chitosugars. The polypeptide is Chitoporin (chiP) (Vibrio furnissii).